A 381-amino-acid chain; its full sequence is Prokineticin receptor 2 (381 aa).

Residues 1 to 51 lie on the Extracellular side of the membrane; that stretch reads MGPQNRNTSFAPDLNPPQDHVSLNYSYGDYDLPLGEDEDVTKTQTFFAAKI. N-linked (GlcNAc...) asparagine glycans are attached at residues Asn-7 and Asn-24. A helical membrane pass occupies residues 52 to 72; that stretch reads VIGVALAGIMLVCGIGNFVFI. At 73-86 the chain is on the cytoplasmic side; the sequence is AALARYKKLRNLTN. Residues 87-107 form a helical membrane-spanning segment; that stretch reads LLIANLAISDFLVAIVCCPFE. At 108–133 the chain is on the extracellular side; sequence MDYYVVRQLSWAHGHVLCASVNYLRT. Residues Cys-125 and Cys-205 are joined by a disulfide bond. The chain crosses the membrane as a helical span at residues 134-154; sequence VSLYVSTNALLAIAIDRYLAI. Residues 155-168 are Cytoplasmic-facing; that stretch reads VHPLKPRMNYQTAS. A helical transmembrane segment spans residues 169 to 189; the sequence is FLIALVWMVSILIAVPSAYFT. Over 190–220 the chain is Extracellular; that stretch reads TETILVIVKNQEKIFCGQIWSVDQQLYYKSY. Residues 221–241 form a helical membrane-spanning segment; the sequence is FLFVFGLEFVGPVVTMTLCYA. Over 242-270 the chain is Cytoplasmic; the sequence is RISQELWFKAVPGFQTEQIRKRLRCRRKT. Residues 271-291 form a helical membrane-spanning segment; it reads VLLLMGILTAYVLCWAPFYGF. Residues 292–310 lie on the Extracellular side of the membrane; it reads TIVRDFFPTVVVKEKHYLT. Residues 311–331 traverse the membrane as a helical segment; that stretch reads AFYVVECIAMSNSMINTICFV. At 332-381 the chain is on the cytoplasmic side; sequence TVKNNTMKYFKKMLRLHWRPSHYGSKSSADLDLKTSGVPATEEVDCIRLK.

It belongs to the G-protein coupled receptor 1 family. As to quaternary structure, homodimer. As to expression, expressed in several regions of the brain, including paraventricular hypothalamic nucleus, dorsal medial hypothalamic nucleus, paratenial thalamic nuclei, paracentral thalamic nucleus, lateral habenular nucleus, lateral septal nucleus, lateral globus pallidus and amygdala. Highest expression seen in paraventricular thalamic nuclei and is also extensively expressed in the suprachiasmatic nucleus.

It localises to the cell membrane. Its function is as follows. Receptor for prokineticin 2. Exclusively coupled to the G(q) subclass of heteromeric G proteins. Activation leads to mobilization of calcium, stimulation of phosphoinositide turnover and activation of p44/p42 mitogen-activated protein kinase. This chain is Prokineticin receptor 2 (Prokr2), found in Mus musculus (Mouse).